A 146-amino-acid polypeptide reads, in one-letter code: Large ribosomal subunit protein uL15 (146 aa).

Basic and acidic residues predominate over residues 1-13 (MKLHELHSAEGSR). Positions 1–55 (MKLHELHSAEGSRRNRKRVGRGTSSGYGKTSGRGQKGQLARQGGHTRLGFEGGQM) are disordered. Residues 23–35 (TSSGYGKTSGRGQ) are compositionally biased toward gly residues.

Belongs to the universal ribosomal protein uL15 family. As to quaternary structure, part of the 50S ribosomal subunit.

Its function is as follows. Binds to the 23S rRNA. The sequence is that of Large ribosomal subunit protein uL15 from Lactobacillus helveticus (strain DPC 4571).